Consider the following 497-residue polypeptide: tRNA (adenine(58)-N(1))-methyltransferase non-catalytic subunit TRM6 (497 aa).

The segment at Leu81–Lys103 is disordered. The segment at Asn95 to Gln105 is substrate. Thr108 carries the post-translational modification Phosphothreonine. Substrate regions lie at residues Lys146 to Tyr155 and Arg176 to His183. Positions Met275 to Arg354 are disordered. A compositionally biased stretch (acidic residues) spans Ser289–Ile307. Basic and acidic residues predominate over residues Pro328 to Arg354. 2 residues coordinate substrate: Arg349 and Arg377. 2 substrate regions span residues Arg415–Leu423 and Gln434–His441. The segment at Thr474–Ser497 is disordered. Residues Asp478–Ala487 show a composition bias toward basic and acidic residues.

Belongs to the TRM6/GCD10 family. In terms of assembly, heterotetramer; composed of two copies of TRMT6 and two copies of TRMT61A.

The protein localises to the nucleus. Substrate-binding subunit of tRNA (adenine-N(1)-)-methyltransferase, which catalyzes the formation of N(1)-methyladenine at position 58 (m1A58) in initiator methionyl-tRNA. Together with the TRMT61A catalytic subunit, part of a mRNA N(1)-methyltransferase complex that mediates methylation of adenosine residues at the N(1) position of a small subset of mRNAs: N(1) methylation takes place in tRNA T-loop-like structures of mRNAs and is only present at low stoichiometries. The chain is tRNA (adenine(58)-N(1))-methyltransferase non-catalytic subunit TRM6 (Trmt6) from Mus musculus (Mouse).